Consider the following 99-residue polypeptide: Small ribosomal subunit protein bS18 (99 aa).

Belongs to the bacterial ribosomal protein bS18 family. In terms of assembly, part of the 30S ribosomal subunit. Forms a tight heterodimer with protein bS6.

Functionally, binds as a heterodimer with protein bS6 to the central domain of the 16S rRNA, where it helps stabilize the platform of the 30S subunit. The protein is Small ribosomal subunit protein bS18 of Christiangramia forsetii (strain DSM 17595 / CGMCC 1.15422 / KT0803) (Gramella forsetii).